A 253-amino-acid chain; its full sequence is Ubiquinone/menaquinone biosynthesis C-methyltransferase UbiE (253 aa).

S-adenosyl-L-methionine is bound by residues Thr76, Asp97, 125–126 (NA), and Ser142.

The protein belongs to the class I-like SAM-binding methyltransferase superfamily. MenG/UbiE family.

It catalyses the reaction a 2-demethylmenaquinol + S-adenosyl-L-methionine = a menaquinol + S-adenosyl-L-homocysteine + H(+). It carries out the reaction a 2-methoxy-6-(all-trans-polyprenyl)benzene-1,4-diol + S-adenosyl-L-methionine = a 5-methoxy-2-methyl-3-(all-trans-polyprenyl)benzene-1,4-diol + S-adenosyl-L-homocysteine + H(+). Its pathway is quinol/quinone metabolism; menaquinone biosynthesis; menaquinol from 1,4-dihydroxy-2-naphthoate: step 2/2. It participates in cofactor biosynthesis; ubiquinone biosynthesis. Methyltransferase required for the conversion of demethylmenaquinol (DMKH2) to menaquinol (MKH2) and the conversion of 2-polyprenyl-6-methoxy-1,4-benzoquinol (DDMQH2) to 2-polyprenyl-3-methyl-6-methoxy-1,4-benzoquinol (DMQH2). This chain is Ubiquinone/menaquinone biosynthesis C-methyltransferase UbiE, found in Xanthomonas campestris pv. campestris (strain ATCC 33913 / DSM 3586 / NCPPB 528 / LMG 568 / P 25).